The chain runs to 469 residues: UDP-N-acetylmuramate--L-alanine ligase (469 aa).

119–125 (GTHGKTT) provides a ligand contact to ATP.

The protein belongs to the MurCDEF family.

Its subcellular location is the cytoplasm. It catalyses the reaction UDP-N-acetyl-alpha-D-muramate + L-alanine + ATP = UDP-N-acetyl-alpha-D-muramoyl-L-alanine + ADP + phosphate + H(+). It functions in the pathway cell wall biogenesis; peptidoglycan biosynthesis. In terms of biological role, cell wall formation. In Ruthia magnifica subsp. Calyptogena magnifica, this protein is UDP-N-acetylmuramate--L-alanine ligase.